The primary structure comprises 295 residues: sn-glycerol-3-phosphate transport system permease protein UgpA (295 aa).

Topologically, residues 1–11 (MSSFRPVFRSR) are cytoplasmic. A helical transmembrane segment spans residues 12-32 (WLPYLLVAPQLVITVIFFIWP). Residues 33–80 (AGEALWYSLQSVDPFGFSSQFVGLENFVALFHDSYYLDAFWTTIKFSA) are Periplasmic-facing. Residues 76 to 284 (IKFSALVTFS…FLVIILTVVQ (209 aa)) form the ABC transmembrane type-1 domain. The helical transmembrane segment at 81–101 (LVTFSGLLVSLFFAALVDYVV) threads the bilayer. The Cytoplasmic portion of the chain corresponds to 102 to 109 (RGSRFYQT). Residues 110-130 (LMLLPYAVAPAVAAVLWIFLF) form a helical membrane-spanning segment. Residues 131–157 (NPGRGLITHFLGEFGYDWNHAQNSGQA) lie on the Periplasmic side of the membrane. Residues 158–178 (MFLVVFASVWKQISYNFLFFF) traverse the membrane as a helical segment. At 179–207 (AALQSIPRSLVEAAAIDGAGPIRRFFRLS) the chain is on the cytoplasmic side. A helical membrane pass occupies residues 208–228 (LPLIAPVSFFLLVVNLVYAFF). At 229 to 262 (DTFPVIDAATAGGPVQATTTLIYKIYREGFTGLD) the chain is on the periplasmic side. A helical transmembrane segment spans residues 263-283 (LSASAAQSVVLMFLVIILTVV). The Cytoplasmic segment spans residues 284–295 (QFRYVESKVRYQ).

Belongs to the binding-protein-dependent transport system permease family. UgpAE subfamily. The complex is composed of two ATP-binding proteins (UgpC), two transmembrane proteins (UgpA and UgpE) and a solute-binding protein (UgpB).

The protein localises to the cell inner membrane. Its function is as follows. Part of the ABC transporter complex UgpBAEC involved in sn-glycerol-3-phosphate (G3P) import. Probably responsible for the translocation of the substrate across the membrane. This Salmonella choleraesuis (strain SC-B67) protein is sn-glycerol-3-phosphate transport system permease protein UgpA (ugpA).